We begin with the raw amino-acid sequence, 418 residues long: MLHPRARTMLLLSLPAVAIGIASSLILIVVMKIASVLQNLLWQRLPGTLGIAQDSPLWIIGVLTLTGIAVGLVIRFSQGHAGPDPACEPLIGAPVPPSALPRLIVALILGLAGGVSLGPEHPIMTVNIALAVAIGARLLPRVNRMEWTILASAGTIGALFGTPVAAALIFSQTLNGSSEVPLWDRLFAPLMAAAAGALTTGLFFHPHFSLPIAHYGQMEMTDILSGAIVAAIAIAAGMVAVWCLPRLHAMMNQMKNPVLVLGIGGFILGILGVIGGPVSLFKGLDEMQQMVANQAFSTSDYFLLAVIKLAALVVAAASGFRGGRIFPAVFVGVALGLMLHEHVPAVPAAITVSCAILGIVLVVTRDGWLSLFMAAVVVPNTTLLPLLCIVMLPAWLLLAGKPMMMVNRPKQQPPHDNV.

Transmembrane regions (helical) follow at residues 15-37 (PAVA…ASVL), 57-79 (LWII…FSQG), 99-118 (ALPR…VSLG), 149-171 (ILAS…LIFS), 186-208 (LFAP…HPHF), 221-243 (TDIL…AVWC), 258-280 (VLVL…PVSL), 301-323 (YFLL…FRGG), 343-363 (VPAV…VLVV), and 376-398 (VVVP…WLLL).

The protein belongs to the chloride channel (TC 2.A.49) family.

It localises to the cell membrane. The sequence is that of Putative ion-transport protein YfeO (yfeO) from Shigella flexneri.